Here is a 623-residue protein sequence, read N- to C-terminus: Chaperone protein DnaK (623 aa).

At Thr-197 the chain carries Phosphothreonine; by autocatalysis. Residues 595 to 615 (AENMYKKDEPNTANDKKKKDD) show a composition bias toward basic and acidic residues. The segment at 595 to 623 (AENMYKKDEPNTANDKKKKDDDVIDAEVE) is disordered.

This sequence belongs to the heat shock protein 70 family.

Its function is as follows. Acts as a chaperone. This is Chaperone protein DnaK from Campylobacter jejuni subsp. doylei (strain ATCC BAA-1458 / RM4099 / 269.97).